The chain runs to 134 residues: DNA-binding protein H-NS homolog (134 aa).

Residues 106-134 (HKTWTGQGRTPRPIQNALNKGKSLSDFEI) form a disordered region. Residues 112 to 117 (QGRTPR) mediate DNA binding.

It belongs to the histone-like protein H-NS family. As to quaternary structure, homodimer that oligomerizes on DNA into higher-order complexes that form bridges between disparate regions of DNA compacting it.

The protein resides in the cytoplasm. The protein localises to the nucleoid. Its function is as follows. A DNA-binding protein implicated in transcriptional repression and chromosome organization and compaction. Binds nucleation sites in AT-rich DNA and bridges them, forming higher-order nucleoprotein complexes and condensing the chromosome. As many horizontally transferred genes are AT-rich, it plays a central role in silencing foreign genes. A subset of genes are repressed by H-NS in association with other proteins. The chain is DNA-binding protein H-NS homolog (hns) from Haemophilus influenzae (strain ATCC 51907 / DSM 11121 / KW20 / Rd).